A 767-amino-acid polypeptide reads, in one-letter code: uncharacterized protein (767 aa).

Disordered regions lie at residues 171–209 (LPVW…LRTP), 314–340 (ETEA…CQEE), and 533–566 (RDHG…PRGF). 2 stretches are compositionally biased toward basic and acidic residues: residues 322–331 (PDPRPEKDAK) and 552–564 (ETKD…RDPR).

This is an uncharacterized protein from Homo sapiens (Human).